The chain runs to 401 residues: Aspartate aminotransferase, mitochondrial (401 aa).

At Thr-19 the chain carries Phosphothreonine. At Lys-30 the chain carries N6-acetyllysine. Residue Gly-36 coordinates substrate. Lys-44 carries the N6-acetyllysine; alternate modification. The residue at position 44 (Lys-44) is an N6-succinyllysine; alternate. The residue at position 53 (Lys-53) is an N6-acetyllysine. Position 61 is an N6-acetyllysine; alternate (Lys-61). An N6-succinyllysine; alternate modification is found at Lys-61. Position 67 is a 3'-nitrotyrosine; alternate (Tyr-67). Tyr-67 is modified (phosphotyrosine; alternate). N6-acetyllysine; alternate occurs at positions 78, 93, and 130. 3 positions are modified to N6-succinyllysine; alternate: Lys-78, Lys-93, and Lys-130. Trp-133 is a binding site for substrate. Lys-156 bears the N6-acetyllysine; alternate mark. Position 156 is an N6-succinyllysine; alternate (Lys-156). Asn-186 contacts substrate. Lys-198 carries the N6-succinyllysine modification. Lys-205 carries the N6-acetyllysine modification. N6-acetyllysine; alternate occurs at positions 250 and 267. The residue at position 250 (Lys-250) is an N6-(pyridoxal phosphate)lysine; alternate. N6-succinyllysine; alternate is present on Lys-267. Residue Lys-273 is modified to N6-acetyllysine. An N6-acetyllysine; alternate modification is found at Lys-280. Lys-280 carries the N6-succinyllysine; alternate modification. At Arg-284 the chain carries Asymmetric dimethylarginine. Lys-309 bears the N6-acetyllysine; alternate mark. The residue at position 309 (Lys-309) is an N6-succinyllysine; alternate. Lys-316 carries the post-translational modification N6-acetyllysine. The residue at position 334 (Lys-334) is an N6-acetyllysine; alternate. Lys-334 bears the N6-succinyllysine; alternate mark. N6-acetyllysine occurs at positions 335 and 358. Residues Lys-367 and Lys-375 each carry the N6-acetyllysine; alternate modification. 2 positions are modified to N6-succinyllysine; alternate: Lys-367 and Lys-375. Arg-378 is a binding site for substrate.

It belongs to the class-I pyridoxal-phosphate-dependent aminotransferase family. In terms of assembly, homodimer. Requires pyridoxal 5'-phosphate as cofactor.

The protein resides in the mitochondrion matrix. It is found in the cell membrane. It catalyses the reaction L-aspartate + 2-oxoglutarate = oxaloacetate + L-glutamate. The catalysed reaction is L-kynurenine + 2-oxoglutarate = kynurenate + L-glutamate + H2O. In terms of biological role, catalyzes the irreversible transamination of the L-tryptophan metabolite L-kynurenine to form kynurenic acid (KA). As a member of the malate-aspartate shuttle, it has a key role in the intracellular NAD(H) redox balance. Is important for metabolite exchange between mitochondria and cytosol, and for amino acid metabolism. Facilitates cellular uptake of long-chain free fatty acids. This chain is Aspartate aminotransferase, mitochondrial (GOT2), found in Equus caballus (Horse).